Consider the following 330-residue polypeptide: GTPase Obg (330 aa).

The Obg domain maps to 1–159 (MHFIDEVKIY…MWIHLSLKLL (159 aa)). Positions 160–327 (SDVGLVGLPN…IVKLALETIK (168 aa)) constitute an OBG-type G domain. GTP-binding positions include 166–173 (GLPNAGKS), 191–195 (FTTLV), 212–215 (DIPG), 279–282 (NKCD), and 308–310 (STC). Residues S173 and T193 each coordinate Mg(2+).

The protein belongs to the TRAFAC class OBG-HflX-like GTPase superfamily. OBG GTPase family. In terms of assembly, monomer. Mg(2+) serves as cofactor.

The protein resides in the cytoplasm. An essential GTPase which binds GTP, GDP and possibly (p)ppGpp with moderate affinity, with high nucleotide exchange rates and a fairly low GTP hydrolysis rate. Plays a role in control of the cell cycle, stress response, ribosome biogenesis and in those bacteria that undergo differentiation, in morphogenesis control. This chain is GTPase Obg, found in Rickettsia rickettsii (strain Iowa).